We begin with the raw amino-acid sequence, 104 residues long: Large ribosomal subunit protein uL24 (104 aa).

This sequence belongs to the universal ribosomal protein uL24 family. In terms of assembly, part of the 50S ribosomal subunit.

Functionally, one of two assembly initiator proteins, it binds directly to the 5'-end of the 23S rRNA, where it nucleates assembly of the 50S subunit. Its function is as follows. One of the proteins that surrounds the polypeptide exit tunnel on the outside of the subunit. This chain is Large ribosomal subunit protein uL24, found in Pectobacterium atrosepticum (strain SCRI 1043 / ATCC BAA-672) (Erwinia carotovora subsp. atroseptica).